The sequence spans 1178 residues: DNA-directed RNA polymerase subunit beta' (1178 aa).

Positions 60, 62, 75, and 78 each coordinate Zn(2+). The Mg(2+) site is built by Asp-450, Asp-452, and Asp-454. Zn(2+) contacts are provided by Cys-795, Cys-869, Cys-876, and Cys-879.

It belongs to the RNA polymerase beta' chain family. As to quaternary structure, the RNAP catalytic core consists of 2 alpha, 1 beta, 1 beta' and 1 omega subunit. When a sigma factor is associated with the core the holoenzyme is formed, which can initiate transcription. Mg(2+) serves as cofactor. The cofactor is Zn(2+).

It catalyses the reaction RNA(n) + a ribonucleoside 5'-triphosphate = RNA(n+1) + diphosphate. Its function is as follows. DNA-dependent RNA polymerase catalyzes the transcription of DNA into RNA using the four ribonucleoside triphosphates as substrates. This chain is DNA-directed RNA polymerase subunit beta', found in Clostridium botulinum (strain Loch Maree / Type A3).